A 422-amino-acid polypeptide reads, in one-letter code: GTPase Obg (422 aa).

Positions 1–156 (MKFIDEVNVL…FALRLVLKVL (156 aa)) constitute an Obg domain. Residues 157–324 (ADVGLVGKPS…LKAAIFKMLE (168 aa)) enclose the OBG-type G domain. GTP is bound by residues 163–170 (GKPSAGKS), 188–192 (FTTLV), 209–212 (DLPG), 278–281 (NKSD), and 305–307 (SAL). Residues Ser-170 and Thr-190 each contribute to the Mg(2+) site. The region spanning 342–420 (NITLDRDALK…IGNFEFDWSD (79 aa)) is the OCT domain.

It belongs to the TRAFAC class OBG-HflX-like GTPase superfamily. OBG GTPase family. As to quaternary structure, monomer. The cofactor is Mg(2+).

The protein localises to the cytoplasm. Its function is as follows. An essential GTPase which binds GTP, GDP and possibly (p)ppGpp with moderate affinity, with high nucleotide exchange rates and a fairly low GTP hydrolysis rate. Plays a role in control of the cell cycle, stress response, ribosome biogenesis and in those bacteria that undergo differentiation, in morphogenesis control. This Metamycoplasma arthritidis (strain 158L3-1) (Mycoplasma arthritidis) protein is GTPase Obg.